Reading from the N-terminus, the 231-residue chain is Ribonuclease HII (231 aa).

One can recognise an RNase H type-2 domain in the interval 38–227; sequence ELVAGGDEAG…IKSFYGQLKL (190 aa). A divalent metal cation-binding residues include Asp-44, Glu-45, and Asp-136.

It belongs to the RNase HII family. Requires Mn(2+) as cofactor. The cofactor is Mg(2+).

It is found in the cytoplasm. The enzyme catalyses Endonucleolytic cleavage to 5'-phosphomonoester.. Endonuclease that specifically degrades the RNA of RNA-DNA hybrids. This chain is Ribonuclease HII, found in Carboxydothermus hydrogenoformans (strain ATCC BAA-161 / DSM 6008 / Z-2901).